Consider the following 660-residue polypeptide: Bifunctional polymyxin resistance protein ArnA (660 aa).

Residues 1–304 (MKAVVFAYHD…TLGLVAGARL (304 aa)) form a formyltransferase ArnAFT region. Catalysis depends on H104, which acts as the Proton donor; for formyltransferase activity. Residues R114 and 136–140 (VKRAD) contribute to the (6R)-10-formyltetrahydrofolate site. Residues 314-660 (RRTRVLILGV…QSVEPGDAEE (347 aa)) are dehydrogenase ArnADH. NAD(+) is bound by residues D347 and 368–369 (DI). Residues A393, Y398, and 432–433 (TS) each bind UDP-alpha-D-glucuronate. The active-site Proton acceptor; for decarboxylase activity is E434. UDP-alpha-D-glucuronate is bound by residues R460, N492, 526-535 (KLIDGGRQKR), and Y613. The active-site Proton donor; for decarboxylase activity is R619.

This sequence in the N-terminal section; belongs to the Fmt family. UDP-L-Ara4N formyltransferase subfamily. It in the C-terminal section; belongs to the NAD(P)-dependent epimerase/dehydratase family. UDP-glucuronic acid decarboxylase subfamily. In terms of assembly, homohexamer, formed by a dimer of trimers.

The enzyme catalyses UDP-alpha-D-glucuronate + NAD(+) = UDP-beta-L-threo-pentopyranos-4-ulose + CO2 + NADH. The catalysed reaction is UDP-4-amino-4-deoxy-beta-L-arabinose + (6R)-10-formyltetrahydrofolate = UDP-4-deoxy-4-formamido-beta-L-arabinose + (6S)-5,6,7,8-tetrahydrofolate + H(+). The protein operates within nucleotide-sugar biosynthesis; UDP-4-deoxy-4-formamido-beta-L-arabinose biosynthesis; UDP-4-deoxy-4-formamido-beta-L-arabinose from UDP-alpha-D-glucuronate: step 1/3. Its pathway is nucleotide-sugar biosynthesis; UDP-4-deoxy-4-formamido-beta-L-arabinose biosynthesis; UDP-4-deoxy-4-formamido-beta-L-arabinose from UDP-alpha-D-glucuronate: step 3/3. It participates in bacterial outer membrane biogenesis; lipopolysaccharide biosynthesis. Its function is as follows. Bifunctional enzyme that catalyzes the oxidative decarboxylation of UDP-glucuronic acid (UDP-GlcUA) to UDP-4-keto-arabinose (UDP-Ara4O) and the addition of a formyl group to UDP-4-amino-4-deoxy-L-arabinose (UDP-L-Ara4N) to form UDP-L-4-formamido-arabinose (UDP-L-Ara4FN). The modified arabinose is attached to lipid A and is required for resistance to polymyxin and cationic antimicrobial peptides. The sequence is that of Bifunctional polymyxin resistance protein ArnA from Erwinia tasmaniensis (strain DSM 17950 / CFBP 7177 / CIP 109463 / NCPPB 4357 / Et1/99).